We begin with the raw amino-acid sequence, 414 residues long: Glutamyl-tRNA reductase (414 aa).

Substrate contacts are provided by residues 48 to 51 (TCNR), S104, 109 to 111 (EAQ), and Q115. C49 serves as the catalytic Nucleophile. Residue 184-189 (GAGEMI) participates in NADP(+) binding.

It belongs to the glutamyl-tRNA reductase family. In terms of assembly, homodimer.

The catalysed reaction is (S)-4-amino-5-oxopentanoate + tRNA(Glu) + NADP(+) = L-glutamyl-tRNA(Glu) + NADPH + H(+). It functions in the pathway porphyrin-containing compound metabolism; protoporphyrin-IX biosynthesis; 5-aminolevulinate from L-glutamyl-tRNA(Glu): step 1/2. Catalyzes the NADPH-dependent reduction of glutamyl-tRNA(Glu) to glutamate 1-semialdehyde (GSA). This Methylobacillus flagellatus (strain ATCC 51484 / DSM 6875 / VKM B-1610 / KT) protein is Glutamyl-tRNA reductase.